Reading from the N-terminus, the 354-residue chain is MRKLLIFSISAYLMAGIVSCKGVDSATPVTEDRLALNAVNAPADNTVNIKTFDKVKNAFGDGLSQSAEGTFTFPADVTTVKTIKMFIKNECPNKTCDEWDRYANVYVKNKTTGEWYEIGRFITPYWVGTEKLPRGLEIDVTDFKSLLSGNTELKIYTETWLAKGREYSVDFDIVYGTPDYKYSAVVPVIQYNKSSIDGVPYGKAHTLGLKKNIQLPTNTEKAYLRTTISGWGHAKPYDAGSRGCAEWCFRTHTIAINNANTFQHQLGALGCSANPINNQSPGNWAPDRAGWCPGMAVPTRIDVLNNSLTGSTFSYEYKFQSWTNNGTNGDAFYAISSFVIAKSNTPISAPVVTN.

The signal sequence occupies residues 1-40; that stretch reads MRKLLIFSISAYLMAGIVSCKGVDSATPVTEDRLALNAVN. C91 and C96 are oxidised to a cystine. Active-site residues include D100, E158, and E246. Intrachain disulfides connect C244–C248 and C271–C292.

Monomer.

It catalyses the reaction Hydrolysis of an N(4)-(acetyl-beta-D-glucosaminyl)asparagine residue in which the glucosamine residue may be further glycosylated, to yield a (substituted) N-acetyl-beta-D-glucosaminylamine and a peptide containing an aspartate residue.. Its function is as follows. Cleaves an entire glycan from a glycoprotein. Requires that the glycosylated asparagine moiety (reaction 1) be substituted on its amino (R1) and carboxyl (R2) terminus with a polypeptide chain. The sequence is that of Peptide-N(4)-(N-acetyl-beta-D-glucosaminyl)asparagine amidase F (ngl) from Elizabethkingia miricola (Chryseobacterium miricola).